Consider the following 218-residue polypeptide: MNLVGSYAHHHHHHHHHHPHPAHPMLHEPFLFGPASRCHQERPYFQSWLLSPADAAPDFPAGGPPPAAAAAAASYGPDARPGQSPGRLEALGGRLGRRKGSGPKKERRRTESINSAFAELRECIPNVPADTKLSKIKTLRLATSYIAYLMDVLAKDAQAGDPEAFKAELKKADGGRESKRKRELQQHEGFPPALGPGEKRIKGRTGWPQQVWALELNQ.

Disordered regions lie at residues 1 to 23, 56 to 112, and 172 to 203; these read MNLV…HPAH, APDF…RTES, and ADGG…RIKG. Over residues 8-21 the composition is skewed to basic residues; the sequence is AHHHHHHHHHHPHP. Positions 68-92 are enriched in low complexity; sequence AAAAAASYGPDARPGQSPGRLEALG. Positions 95-107 are enriched in basic residues; it reads LGRRKGSGPKKER. The region spanning 97 to 149 is the bHLH domain; the sequence is RRKGSGPKKERRRTESINSAFAELRECIPNVPADTKLSKIKTLRLATSYIAYL. T110 is modified (phosphothreonine; by PLK4). Phosphoserine; by PLK4 is present on S112.

In terms of assembly, efficient DNA binding requires dimerization with another bHLH protein. Forms homodimers and heterodimers with TCF3 gene products E12 and E47, HAND2 and HEY1, HEY2 and HEYL (hairy-related transcription factors). Interacts with MDFIC. Interacts with SOX15; the interaction enhances HAND1-induced differentiation of trophoblast giant cells. Post-translationally, phosphorylation by PLK4 disrupts the interaction with MDFIC and leads to translocation into the nucleoplasm, allowing dimerization and transcription factor activity.

It localises to the nucleus. The protein resides in the nucleoplasm. It is found in the nucleolus. Functionally, transcription factor that plays an essential role in both trophoblast giant cell differentiation and in cardiac morphogenesis. Binds the DNA sequence 5'-NRTCTG-3' (non-canonical E-box). Acts as a transcriptional repressor of SOX15. In the adult, could be required for ongoing expression of cardiac-specific genes. The protein is Heart- and neural crest derivatives-expressed protein 1 (HAND1) of Bos taurus (Bovine).